The primary structure comprises 217 residues: N-(5'-phosphoribosyl)anthranilate isomerase (217 aa).

This sequence belongs to the TrpF family.

It carries out the reaction N-(5-phospho-beta-D-ribosyl)anthranilate = 1-(2-carboxyphenylamino)-1-deoxy-D-ribulose 5-phosphate. It functions in the pathway amino-acid biosynthesis; L-tryptophan biosynthesis; L-tryptophan from chorismate: step 3/5. This is N-(5'-phosphoribosyl)anthranilate isomerase from Bacillus velezensis (strain DSM 23117 / BGSC 10A6 / LMG 26770 / FZB42) (Bacillus amyloliquefaciens subsp. plantarum).